A 177-amino-acid polypeptide reads, in one-letter code: N5-carboxyaminoimidazole ribonucleotide mutase (177 aa).

Residues S18, D21, and R48 each contribute to the substrate site.

It belongs to the AIR carboxylase family. Class I subfamily.

It carries out the reaction 5-carboxyamino-1-(5-phospho-D-ribosyl)imidazole + H(+) = 5-amino-1-(5-phospho-D-ribosyl)imidazole-4-carboxylate. Its pathway is purine metabolism; IMP biosynthesis via de novo pathway; 5-amino-1-(5-phospho-D-ribosyl)imidazole-4-carboxylate from 5-amino-1-(5-phospho-D-ribosyl)imidazole (N5-CAIR route): step 2/2. Its function is as follows. Catalyzes the conversion of N5-carboxyaminoimidazole ribonucleotide (N5-CAIR) to 4-carboxy-5-aminoimidazole ribonucleotide (CAIR). The chain is N5-carboxyaminoimidazole ribonucleotide mutase from Pyrococcus horikoshii (strain ATCC 700860 / DSM 12428 / JCM 9974 / NBRC 100139 / OT-3).